We begin with the raw amino-acid sequence, 406 residues long: Elongation factor Tu, chloroplastic (406 aa).

In terms of domain architecture, tr-type G spans 8–210 (KTHINIATIG…LLDSYIPKPK (203 aa)). GTP-binding positions include 17–24 (GHFNHGKT), 77–81 (DCPGH), and 132–135 (NKED). Residue Thr24 participates in Mg(2+) binding.

This sequence belongs to the TRAFAC class translation factor GTPase superfamily. Classic translation factor GTPase family. EF-Tu/EF-1A subfamily. Monomer.

It localises to the plastid. It is found in the chloroplast. The catalysed reaction is GTP + H2O = GDP + phosphate + H(+). In terms of biological role, GTP hydrolase that promotes the GTP-dependent binding of aminoacyl-tRNA to the A-site of ribosomes during protein biosynthesis. This is Elongation factor Tu, chloroplastic (tufA) from Chaetosphaeridium globosum (Charophycean green alga).